The sequence spans 57 residues: COP9 signalosome complex subunit 9 (57 aa).

This sequence belongs to the CSN9 family. In terms of assembly, component of the CSN complex, probably composed of cops1, cops2, cops3, cops4, cops5, cops6, cops7, cops8 and cops9.

The protein localises to the nucleus. It localises to the cytoplasm. It is found in the nucleoplasm. In terms of biological role, component of the COP9 signalosome complex (CSN), a complex involved in various cellular and developmental processes. The CSN complex is an essential regulator of the ubiquitin (Ubl) conjugation pathway by mediating the deneddylation of the cullin subunits of SCF-type E3 ligase complexes, leading to decrease the Ubl ligase activity. May play a role in cell proliferation. The polypeptide is COP9 signalosome complex subunit 9 (Xenopus tropicalis (Western clawed frog)).